The primary structure comprises 59 residues: Putative antitoxin AF_1090 (59 aa).

The protein belongs to the UPF0165 family.

Its function is as follows. Possibly the antitoxin component of a type II toxin-antitoxin (TA) system. The sequence is that of Putative antitoxin AF_1090 from Archaeoglobus fulgidus (strain ATCC 49558 / DSM 4304 / JCM 9628 / NBRC 100126 / VC-16).